We begin with the raw amino-acid sequence, 67 residues long: Sperm protamine P1 (67 aa).

A disordered region spans residues 1–67 (MASYRNSRSR…RRRKRNNENK (67 aa)). 2 stretches are compositionally biased toward basic residues: residues 7–25 (SRSRSRSRFRRRRGRRSRV) and 34–67 (RSSRRRRRGKGRAHSGKKGRRSGSRRRKRNNENK).

Belongs to the protamine P1 family. In terms of tissue distribution, testis.

Its subcellular location is the nucleus. The protein resides in the chromosome. Protamines substitute for histones in the chromatin of sperm during the haploid phase of spermatogenesis. They compact sperm DNA into a highly condensed, stable and inactive complex. In Isoodon macrourus (Short-nosed bandicoot), this protein is Sperm protamine P1 (PRM1).